Here is a 96-residue protein sequence, read N- to C-terminus: Co-chaperonin GroES (96 aa).

Belongs to the GroES chaperonin family. In terms of assembly, heptamer of 7 subunits arranged in a ring. Interacts with the chaperonin GroEL.

The protein localises to the cytoplasm. Functionally, together with the chaperonin GroEL, plays an essential role in assisting protein folding. The GroEL-GroES system forms a nano-cage that allows encapsulation of the non-native substrate proteins and provides a physical environment optimized to promote and accelerate protein folding. GroES binds to the apical surface of the GroEL ring, thereby capping the opening of the GroEL channel. The protein is Co-chaperonin GroES of Paraburkholderia phytofirmans (strain DSM 17436 / LMG 22146 / PsJN) (Burkholderia phytofirmans).